A 266-amino-acid polypeptide reads, in one-letter code: MTWLEIVVLALIQGLTEFLPISSSAHLILPSEVWGWQDQGLAFDVAVHVGTLLAVMVYFRADIFNLLNGWIKQITGGGASQESRLAWAVILGTIPACVAGLLLDSWIEENLRSALVIALTTIGFGVLLGMADRKEGTRDIDQFTLKDALIIGVSQALALIPGTSRSGITMTSALFLGLNRDTAARFSFLLSIPLIAAAGLFKGLELADTGTSSQWSEIAGATLISAVSAYACIHLFLKFLQKIGFMPFVIYRMLLGAGLLVWLYVA.

8 helical membrane passes run 1–21, 39–59, 87–107, 111–131, 143–163, 186–206, 217–237, and 243–263; these read MTWL…FLPI, QGLA…MVYF, WAVI…DSWI, LRSA…LGMA, FTLK…IPGT, FSFL…GLEL, EIAG…HLFL, and IGFM…LVWL.

It belongs to the UppP family.

The protein resides in the cell inner membrane. The enzyme catalyses di-trans,octa-cis-undecaprenyl diphosphate + H2O = di-trans,octa-cis-undecaprenyl phosphate + phosphate + H(+). In terms of biological role, catalyzes the dephosphorylation of undecaprenyl diphosphate (UPP). Confers resistance to bacitracin. In Hahella chejuensis (strain KCTC 2396), this protein is Undecaprenyl-diphosphatase.